Consider the following 66-residue polypeptide: Small ribosomal subunit protein bS21 (66 aa).

The protein belongs to the bacterial ribosomal protein bS21 family.

This Bdellovibrio bacteriovorus (strain ATCC 15356 / DSM 50701 / NCIMB 9529 / HD100) protein is Small ribosomal subunit protein bS21.